A 135-amino-acid chain; its full sequence is 30 kDa antigenic glycoprotein (135 aa).

The first 5 residues, 1–5 (GNTYS), serve as a signal peptide directing secretion. 4 N-linked (GlcNAc...) asparagine glycosylation sites follow: N22, N31, N57, and N73.

It to H.contortus 15 kDa excretory/secretory protein.

The protein resides in the secreted. The polypeptide is 30 kDa antigenic glycoprotein (Trichostrongylus colubriformis (Black scour worm)).